Reading from the N-terminus, the 91-residue chain is Small ribosomal subunit protein uS19 (91 aa).

This sequence belongs to the universal ribosomal protein uS19 family.

Protein S19 forms a complex with S13 that binds strongly to the 16S ribosomal RNA. This chain is Small ribosomal subunit protein uS19, found in Parasynechococcus marenigrum (strain WH8102).